A 545-amino-acid chain; its full sequence is Chaperonin GroEL (545 aa).

ATP is bound by residues 30 to 33 (TLGP), Lys51, 87 to 91 (DGTTT), Gly415, and Asp495.

The protein belongs to the chaperonin (HSP60) family. As to quaternary structure, forms a cylinder of 14 subunits composed of two heptameric rings stacked back-to-back. Interacts with the co-chaperonin GroES.

It is found in the cytoplasm. It carries out the reaction ATP + H2O + a folded polypeptide = ADP + phosphate + an unfolded polypeptide.. In terms of biological role, together with its co-chaperonin GroES, plays an essential role in assisting protein folding. The GroEL-GroES system forms a nano-cage that allows encapsulation of the non-native substrate proteins and provides a physical environment optimized to promote and accelerate protein folding. The sequence is that of Chaperonin GroEL from Shewanella amazonensis (strain ATCC BAA-1098 / SB2B).